The chain runs to 205 residues: Protein GrpE (205 aa).

The tract at residues 1–40 (MSRKLHEEELTPEGMDAAQNADPAGDPVSENEGALPAAEP) is disordered.

It belongs to the GrpE family. In terms of assembly, homodimer.

It is found in the cytoplasm. Participates actively in the response to hyperosmotic and heat shock by preventing the aggregation of stress-denatured proteins, in association with DnaK and GrpE. It is the nucleotide exchange factor for DnaK and may function as a thermosensor. Unfolded proteins bind initially to DnaJ; upon interaction with the DnaJ-bound protein, DnaK hydrolyzes its bound ATP, resulting in the formation of a stable complex. GrpE releases ADP from DnaK; ATP binding to DnaK triggers the release of the substrate protein, thus completing the reaction cycle. Several rounds of ATP-dependent interactions between DnaJ, DnaK and GrpE are required for fully efficient folding. The polypeptide is Protein GrpE (Acidobacterium capsulatum (strain ATCC 51196 / DSM 11244 / BCRC 80197 / JCM 7670 / NBRC 15755 / NCIMB 13165 / 161)).